A 462-amino-acid polypeptide reads, in one-letter code: Fasciclin-like arabinogalactan protein 18 (462 aa).

The signal sequence occupies residues 1–25 (MDRCIYGCSVITIFFSFFFLLNASA). N-linked (GlcNAc...) asparagine glycans are attached at residues Asn32, Asn77, and Asn293. FAS1 domains follow at residues 40–185 (NSNS…ERLL) and 271–414 (VKDF…DGVL).

It belongs to the fasciclin-like AGP family.

It localises to the secreted. Functionally, may be a cell surface adhesion protein. The sequence is that of Fasciclin-like arabinogalactan protein 18 (FLA18) from Arabidopsis thaliana (Mouse-ear cress).